Consider the following 175-residue polypeptide: Chromobox protein homolog hpl-2 (175 aa).

The Chromo domain occupies 19 to 78; the sequence is FMVEKVLDKRTGKAGRDEFLIQWQGFPESDSSWEPRENLQCVEMLDEFEREFSKREKPIR. The interval 71–109 is disordered; sequence SKREKPIRKRHSQKPEPSEDQADPEEDKDEKKETNQNDK. Over residues 88–98 the composition is skewed to acidic residues; the sequence is SEDQADPEEDK. The span at 99-109 shows a compositional bias: basic and acidic residues; that stretch reads DEKKETNQNDK. Positions 115-172 constitute a Chromo 2; shadow subtype domain; the sequence is KQLKCIVGLTKGPGELHFLCKFSDDTARLLPAKEVNSRYPSQVIRYYESKLTIQDPKA.

As to quaternary structure, interacts with histone H3 when di-, or tri-methylated at 'Lys-27' (H3K27me2/me3), or tri-methylated at 'Lys-9' (H3K9me3). Interacts with Tar DNA-binding protein homolog tdp-1; interaction may maintain localization of hpl-2 to gene bodies. Interacts with histone H1 his-24, probably via interaction with hpl-1. Interacts with chromobox protein homolog hpl-1. In terms of assembly, may form homodimers. Interacts (via chromo (shadow subtype) domain) with zinc finger protein lin-13 (via PLVPV motif); the interaction is direct and influences localization of hpl-2 to nuclear foci.

It localises to the nucleus. Its subcellular location is the chromosome. Its function is as follows. Seems to be involved in transcriptional silencing in heterochromatin-like complexes. Probably does not act as global transcriptional repressor, instead targeting a subset of genes. Involved in RNA processing mediated by Tar DNA-binding protein homolog tdp-1. Plays a role in linking epigenetic regulation with the innate immune response. Involved in the endoplasmic reticulum (ER) stress response via modulation of the unfolded protein response (UPR), acting mainly through the IRE1-XBP1 pathway and perhaps, to a lesser extent, through the autophagy pathway. May act in a common pathway with retinoblastoma-like protein homolog lin-35 and zinc finger protein lin-13 to influence the ER stress response in the intestine. Plays a role in the formation of the vulva and in fertility, acting together with a CoREST-like complex, and chromobox protein homolog hpl-1. Acting in concert with hpl-1 and histone H1 protein his-24, involved in reproduction, somatic gonad development, male tail development and vulval cell fate specification; perhaps as a result of modulating expression of Hox genes mab-5 and egl-5. In vulval cell fate specification may act by repressing transcription, of EGF family gene lin-3 in hypodermal hyp7, and of homeobox lin-39 in vulval precursor cells (VPC). Role in growth and somatic gonad development is antagonized by histone-lysine N-methyltransferase set-2/SET1. Required for larval development, acting redundantly with hpl-1. Plays a role in regulation of the developmentally arrested larval state known as dauer, longevity, and lipid metabolism. This chain is Chromobox protein homolog hpl-2, found in Caenorhabditis elegans.